The following is a 127-amino-acid chain: Large ribosomal subunit protein bL12 (127 aa).

The tract at residues 94 to 114 (VDGAPSTLKEAASKEEAEEAK) is disordered. A compositionally biased stretch (basic and acidic residues) spans 104–114 (AASKEEAEEAK).

This sequence belongs to the bacterial ribosomal protein bL12 family. In terms of assembly, homodimer. Part of the ribosomal stalk of the 50S ribosomal subunit. Forms a multimeric L10(L12)X complex, where L10 forms an elongated spine to which 2 to 4 L12 dimers bind in a sequential fashion. Binds GTP-bound translation factors.

Forms part of the ribosomal stalk which helps the ribosome interact with GTP-bound translation factors. Is thus essential for accurate translation. The polypeptide is Large ribosomal subunit protein bL12 (Nitratidesulfovibrio vulgaris (strain ATCC 29579 / DSM 644 / CCUG 34227 / NCIMB 8303 / VKM B-1760 / Hildenborough) (Desulfovibrio vulgaris)).